The primary structure comprises 541 residues: Atlastin-3 (541 aa).

The tract at residues 1–22 (MLSPQRTAAVASRGAGDAMENG) is disordered. The interval 1–25 (MLSPQRTAAVASRGAGDAMENGKPG) is N-terminal hypervariable region (HVR). Over 1–445 (MLSPQRTAAV…NVFSTFRTPA (445 aa)) the chain is Cytoplasmic. Residues 57 to 306 (DLDVVVVSVA…LIPYVLNPSK (250 aa)) enclose the GB1/RHD3-type G domain. Residues arginine 70, lysine 71, glycine 72, lysine 73, serine 74, phenylalanine 75, and arginine 109 each contribute to the GDP site. Mg(2+) is bound at residue aspartate 142. 4 residues coordinate GDP: arginine 213, aspartate 214, valine 272, and serine 275. Residues 344–434 (MLQATAANNL…YENFCKHNGS (91 aa)) are 3HB (three-helix bundle) domain. N6-acetyllysine is present on lysine 391. The chain crosses the membrane as a helical span at residues 446 to 466 (VLFTGIAVLYIASGLTGFIGL). Glutamate 467 is a topological domain (lumenal). A helical membrane pass occupies residues 468–488 (VVAQLFNCMVGLLLIALLTWG). At 489–541 (YIRYSGQYLELGGAIDSGAAYVLEQASSHIGNSTQAAVRDAIAGRPPADKKSQ) the chain is on the cytoplasmic side.

The protein belongs to the TRAFAC class dynamin-like GTPase superfamily. GB1/RHD3 GTPase family. GB1 subfamily. As to quaternary structure, monomeric and homodimeric. The homodimer, transiently formed by two molecules on opposing membranes, is the active form mediating ER membrane fusion. Interacts with ZFYVE27; both proteins are involved in endoplasmic reticulum tubular network organization. Interacts with REEP5; both proteins are involved in endoplasmic reticulum tubular network organization.

It is found in the endoplasmic reticulum membrane. The catalysed reaction is GTP + H2O = GDP + phosphate + H(+). In terms of biological role, atlastin-3 (ATL3) is a membrane-anchored GTPase that mediates the GTP-dependent fusion of endoplasmic reticulum (ER) membranes, maintaining the continuous ER network. It facilitates the formation of three-way junctions where ER tubules intersect. Two atlastin-3 on neighboring ER tubules bind GTP and form loose homodimers through the GB1/RHD3-type G domains and 3HB regions. Upon GTP hydrolysis, the 3HB regions tighten, pulling the membranes together to drive their fusion. After fusion, the homodimer disassembles upon release of inorganic phosphate (Pi). Subsequently, GDP dissociates, resetting the monomers to a conformation ready for a new fusion cycle. The sequence is that of Atlastin-3 from Rattus norvegicus (Rat).